We begin with the raw amino-acid sequence, 581 residues long: Aspartate--tRNA ligase (581 aa).

L-aspartate is bound at residue Glu170. Residues 194–197 (QLFK) form an aspartate region. L-aspartate is bound at residue Arg216. Residues 216–218 (RDE) and Gln225 contribute to the ATP site. His439 is a binding site for L-aspartate. Glu468 is an ATP binding site. Arg475 contributes to the L-aspartate binding site. Residue 520–523 (GFDR) coordinates ATP.

The protein belongs to the class-II aminoacyl-tRNA synthetase family. Type 1 subfamily. Homodimer.

Its subcellular location is the cytoplasm. It catalyses the reaction tRNA(Asp) + L-aspartate + ATP = L-aspartyl-tRNA(Asp) + AMP + diphosphate. Catalyzes the attachment of L-aspartate to tRNA(Asp) in a two-step reaction: L-aspartate is first activated by ATP to form Asp-AMP and then transferred to the acceptor end of tRNA(Asp). In Thermosipho melanesiensis (strain DSM 12029 / CIP 104789 / BI429), this protein is Aspartate--tRNA ligase.